Reading from the N-terminus, the 432-residue chain is Bifunctional protein GlmU (432 aa).

The segment at 1 to 223 (MGKKSIIILA…EENFKGVNSK (223 aa)) is pyrophosphorylase. Residues 9–12 (LAAG), lysine 23, glutamine 75, and 82–83 (GT) contribute to the UDP-N-acetyl-alpha-D-glucosamine site. Aspartate 103 provides a ligand contact to Mg(2+). UDP-N-acetyl-alpha-D-glucosamine contacts are provided by glycine 135, glutamate 149, asparagine 164, and asparagine 221. Asparagine 221 provides a ligand contact to Mg(2+). A linker region spans residues 224–244 (VELADAEVIHQNRIKKEFMKA). Residues 245-432 (GVIMRLPDTI…FYKHFSSKKK (188 aa)) are N-acetyltransferase. Arginine 308 and lysine 325 together coordinate UDP-N-acetyl-alpha-D-glucosamine. The active-site Proton acceptor is the histidine 336. UDP-N-acetyl-alpha-D-glucosamine-binding residues include tyrosine 339 and asparagine 350. Acetyl-CoA-binding positions include 359–360 (NY), serine 378, alanine 396, and arginine 413.

In the N-terminal section; belongs to the N-acetylglucosamine-1-phosphate uridyltransferase family. It in the C-terminal section; belongs to the transferase hexapeptide repeat family. Homotrimer. Mg(2+) is required as a cofactor.

Its subcellular location is the cytoplasm. It carries out the reaction alpha-D-glucosamine 1-phosphate + acetyl-CoA = N-acetyl-alpha-D-glucosamine 1-phosphate + CoA + H(+). The catalysed reaction is N-acetyl-alpha-D-glucosamine 1-phosphate + UTP + H(+) = UDP-N-acetyl-alpha-D-glucosamine + diphosphate. It functions in the pathway nucleotide-sugar biosynthesis; UDP-N-acetyl-alpha-D-glucosamine biosynthesis; N-acetyl-alpha-D-glucosamine 1-phosphate from alpha-D-glucosamine 6-phosphate (route II): step 2/2. The protein operates within nucleotide-sugar biosynthesis; UDP-N-acetyl-alpha-D-glucosamine biosynthesis; UDP-N-acetyl-alpha-D-glucosamine from N-acetyl-alpha-D-glucosamine 1-phosphate: step 1/1. It participates in bacterial outer membrane biogenesis; LPS lipid A biosynthesis. Catalyzes the last two sequential reactions in the de novo biosynthetic pathway for UDP-N-acetylglucosamine (UDP-GlcNAc). The C-terminal domain catalyzes the transfer of acetyl group from acetyl coenzyme A to glucosamine-1-phosphate (GlcN-1-P) to produce N-acetylglucosamine-1-phosphate (GlcNAc-1-P), which is converted into UDP-GlcNAc by the transfer of uridine 5-monophosphate (from uridine 5-triphosphate), a reaction catalyzed by the N-terminal domain. The sequence is that of Bifunctional protein GlmU from Aliarcobacter butzleri (strain RM4018) (Arcobacter butzleri).